A 403-amino-acid chain; its full sequence is Protein-export membrane protein SecD (403 aa).

The next 6 membrane-spanning stretches (helical) occupy residues 14-34 (VILL…MGIQ), 238-258 (FAEG…VILI), 265-285 (ILVL…LGAA), 294-314 (LAAI…QIII), 336-356 (FFII…LAYI), and 365-385 (IGLL…GVFI).

It belongs to the SecD/SecF family. SecD subfamily. Part of the protein translocation apparatus. Forms a complex with SecF.

The protein resides in the cell membrane. Functionally, involved in protein export. The protein is Protein-export membrane protein SecD of Methanothermobacter thermautotrophicus (strain ATCC 29096 / DSM 1053 / JCM 10044 / NBRC 100330 / Delta H) (Methanobacterium thermoautotrophicum).